Here is a 481-residue protein sequence, read N- to C-terminus: NADH-quinone oxidoreductase subunit N (481 aa).

The next 14 helical transmembrane spans lie at Ala-11 to Ala-31, Trp-38 to Trp-58, Gly-74 to Ala-94, Ile-103 to Val-123, Phe-128 to Leu-148, Phe-163 to Ala-183, Leu-208 to Met-228, Val-241 to Leu-261, Trp-272 to Ile-292, Met-300 to Gly-322, Thr-332 to Asn-352, Val-368 to Met-388, Gly-404 to Leu-424, and Ser-450 to Ile-470.

The protein belongs to the complex I subunit 2 family. NDH-1 is composed of 14 different subunits. Subunits NuoA, H, J, K, L, M, N constitute the membrane sector of the complex.

The protein resides in the cell inner membrane. It carries out the reaction a quinone + NADH + 5 H(+)(in) = a quinol + NAD(+) + 4 H(+)(out). Its function is as follows. NDH-1 shuttles electrons from NADH, via FMN and iron-sulfur (Fe-S) centers, to quinones in the respiratory chain. The immediate electron acceptor for the enzyme in this species is believed to be ubiquinone. Couples the redox reaction to proton translocation (for every two electrons transferred, four hydrogen ions are translocated across the cytoplasmic membrane), and thus conserves the redox energy in a proton gradient. The chain is NADH-quinone oxidoreductase subunit N from Neisseria gonorrhoeae (strain ATCC 700825 / FA 1090).